A 716-amino-acid chain; its full sequence is Polycystin-2 (716 aa).

Basic and acidic residues-rich tracts occupy residues methionine 1–tryptophan 10 and methionine 30–lysine 41. The disordered stretch occupies residues methionine 1–alanine 44. The Cytoplasmic portion of the chain corresponds to methionine 1–arginine 72. Residues serine 73 to alanine 93 form a helical membrane-spanning segment. Over glutamine 94–methionine 324 the chain is Extracellular. 2 N-linked (GlcNAc...) asparagine glycosylation sites follow: asparagine 150 and asparagine 177. Cysteine 180 and cysteine 193 form a disulfide bridge. Residues isoleucine 325 to isoleucine 345 traverse the membrane as a helical segment. Residues glycine 346 to glutamine 355 lie on the Cytoplasmic side of the membrane. Residues phenylalanine 356–valine 376 form a helical membrane-spanning segment. Asparagine 377 carries N-linked (GlcNAc...) asparagine glycosylation. Topologically, residues asparagine 377–tyrosine 409 are extracellular. The helical transmembrane segment at leucine 410 to valine 430 threads the bilayer. Residues asparagine 431–aspartate 447 are Cytoplasmic-facing. Residues isoleucine 448–leucine 468 traverse the membrane as a helical segment. Residues cysteine 469–asparagine 482 lie on the Extracellular side of the membrane. The pore-forming intramembrane region spans serine 483–phenylalanine 497. At serine 498 to alanine 510 the chain is on the extracellular side. The helical transmembrane segment at phenylalanine 511–isoleucine 531 threads the bilayer. At asparagine 532 to glutamate 716 the chain is on the cytoplasmic side. A Phosphoserine; by CK2 modification is found at serine 534. A coiled-coil region spans residues glutamate 613 to aspartate 680. The segment at arginine 696–glutamate 716 is disordered.

This sequence belongs to the polycystin family. Post-translationally, phosphorylated. CK2 (kin-3 and kin-10) and calcineurin act antagonistically to regulate the phosphorylation state. Exclusively expressed in a subset of 3 categories of adult male sensory neurons: ray neurons, hook neurons and head cephalic (CEM) neurons. Expressed in the male tail.

It localises to the cell membrane. The protein resides in the cell projection. The protein localises to the cilium membrane. Its subcellular location is the cilium. It is found in the axon. It localises to the dendrite. The protein resides in the perikaryon. The protein localises to the endoplasmic reticulum membrane. Functions as a calcium permeable cation channel. Required for 2 aspects of male mating behavior: response to hermaphrodite contact and vulva location. Acts in the same pathway as lov-1 and atp-2 in response behavior. This is Polycystin-2 from Caenorhabditis elegans.